Consider the following 408-residue polypeptide: BTB/POZ and MATH domain-containing protein 3 (408 aa).

The region spanning 24–158 (NGSHQFTIQG…DDCLVINCTV (135 aa)) is the MATH domain. Residues 194-261 (CDIAFQVGDE…IYTDVLPNVH (68 aa)) form the BTB domain.

It belongs to the Tdpoz family. In terms of assembly, homodimer or heterodimer with BPM3 and BPM5. Interacts with CUL3A and CUL3B. Interacts with RAP2-4 and RAP2-13. Binds to MYB56 at the promoter of FLOWERING LOCUS T (FT). In terms of tissue distribution, ubiquitous.

The protein resides in the nucleus. The protein localises to the cytoplasm. The protein operates within protein modification; protein ubiquitination. May act as a substrate-specific adapter of an E3 ubiquitin-protein ligase complex (CUL3-RBX1-BTB) which mediates the ubiquitination and subsequent proteasomal degradation of target proteins. The chain is BTB/POZ and MATH domain-containing protein 3 from Arabidopsis thaliana (Mouse-ear cress).